We begin with the raw amino-acid sequence, 425 residues long: Serine hydroxymethyltransferase 2 (425 aa).

(6S)-5,6,7,8-tetrahydrofolate is bound by residues leucine 121 and 125–127 (GHL). At lysine 230 the chain carries N6-(pyridoxal phosphate)lysine.

Belongs to the SHMT family. Homodimer. Pyridoxal 5'-phosphate is required as a cofactor.

The protein localises to the cytoplasm. It carries out the reaction (6R)-5,10-methylene-5,6,7,8-tetrahydrofolate + glycine + H2O = (6S)-5,6,7,8-tetrahydrofolate + L-serine. Its pathway is one-carbon metabolism; tetrahydrofolate interconversion. It functions in the pathway amino-acid biosynthesis; glycine biosynthesis; glycine from L-serine: step 1/1. Functionally, catalyzes the reversible interconversion of serine and glycine with tetrahydrofolate (THF) serving as the one-carbon carrier. This reaction serves as the major source of one-carbon groups required for the biosynthesis of purines, thymidylate, methionine, and other important biomolecules. Also exhibits THF-independent aldolase activity toward beta-hydroxyamino acids, producing glycine and aldehydes, via a retro-aldol mechanism. The sequence is that of Serine hydroxymethyltransferase 2 from Mycobacterium bovis (strain ATCC BAA-935 / AF2122/97).